Consider the following 115-residue polypeptide: Peptidyl-tRNA hydrolase (115 aa).

The protein belongs to the PTH2 family.

The protein localises to the cytoplasm. It carries out the reaction an N-acyl-L-alpha-aminoacyl-tRNA + H2O = an N-acyl-L-amino acid + a tRNA + H(+). Its function is as follows. The natural substrate for this enzyme may be peptidyl-tRNAs which drop off the ribosome during protein synthesis. The polypeptide is Peptidyl-tRNA hydrolase (Archaeoglobus fulgidus (strain ATCC 49558 / DSM 4304 / JCM 9628 / NBRC 100126 / VC-16)).